The chain runs to 516 residues: Cytochrome P450 1A2 (516 aa).

S69 carries an O-linked (GlcNAc) serine glycan. Residue F226 coordinates substrate. Heme is bound at residue C458.

This sequence belongs to the cytochrome P450 family. As to quaternary structure, interacts with PGRMC1; the interaction requires PGRMC1 homodimerization. Heme is required as a cofactor. In terms of tissue distribution, liver.

It is found in the endoplasmic reticulum membrane. The protein localises to the microsome membrane. The catalysed reaction is an organic molecule + reduced [NADPH--hemoprotein reductase] + O2 = an alcohol + oxidized [NADPH--hemoprotein reductase] + H2O + H(+). It carries out the reaction 17beta-estradiol + reduced [NADPH--hemoprotein reductase] + O2 = 2-hydroxy-17beta-estradiol + oxidized [NADPH--hemoprotein reductase] + H2O + H(+). It catalyses the reaction 17beta-estradiol + reduced [NADPH--hemoprotein reductase] + O2 = 4-hydroxy-17beta-estradiol + oxidized [NADPH--hemoprotein reductase] + H2O + H(+). The enzyme catalyses estrone + reduced [NADPH--hemoprotein reductase] + O2 = 2-hydroxyestrone + oxidized [NADPH--hemoprotein reductase] + H2O + H(+). The catalysed reaction is estrone + reduced [NADPH--hemoprotein reductase] + O2 = 4-hydroxyestrone + oxidized [NADPH--hemoprotein reductase] + H2O + H(+). It carries out the reaction cholesterol + reduced [NADPH--hemoprotein reductase] + O2 = 25-hydroxycholesterol + oxidized [NADPH--hemoprotein reductase] + H2O + H(+). It catalyses the reaction all-trans-retinol + reduced [NADPH--hemoprotein reductase] + O2 = all-trans-retinal + oxidized [NADPH--hemoprotein reductase] + 2 H2O + H(+). The enzyme catalyses all-trans-retinal + reduced [NADPH--hemoprotein reductase] + O2 = all-trans-retinoate + oxidized [NADPH--hemoprotein reductase] + H2O + 2 H(+). The catalysed reaction is (5Z,8Z,11Z,14Z)-eicosatetraenoate + reduced [NADPH--hemoprotein reductase] + O2 = (14R,15S)-epoxy-(5Z,8Z,11Z)-eicosatrienoate + oxidized [NADPH--hemoprotein reductase] + H2O + H(+). It carries out the reaction (5Z,8Z,11Z,14Z)-eicosatetraenoate + reduced [NADPH--hemoprotein reductase] + O2 = (14S,15R)-epoxy-(5Z,8Z,11Z)-eicosatrienoate + oxidized [NADPH--hemoprotein reductase] + H2O + H(+). It catalyses the reaction (5Z,8Z,11Z,14Z,17Z)-eicosapentaenoate + reduced [NADPH--hemoprotein reductase] + O2 = (17R,18S)-epoxy-(5Z,8Z,11Z,14Z)-eicosatetraenoate + oxidized [NADPH--hemoprotein reductase] + H2O + H(+). The enzyme catalyses (4Z,7Z,10Z,13Z,16Z,19Z)-docosahexaenoate + reduced [NADPH--hemoprotein reductase] + O2 = (19R,20S)-epoxy-(4Z,7Z,10Z,13Z,16Z)-docosapentaenoate + oxidized [NADPH--hemoprotein reductase] + H2O + H(+). The catalysed reaction is (5S)-hydroperoxy-(6E,8Z,11Z,14Z)-eicosatetraenoate = 5-oxo-(6E,8Z,11Z,14Z)-eicosatetraenoate + H2O. It carries out the reaction (12S)-hydroperoxy-(5Z,8Z,10E,14Z)-eicosatetraenoate = 12-oxo-(5Z,8Z,10E,14Z)-eicosatetraenoate + H2O. It catalyses the reaction (15S)-hydroperoxy-(5Z,8Z,11Z,13E)-eicosatetraenoate = 15-oxo-(5Z,8Z,11Z,13E)-eicosatetraenoate + H2O. The enzyme catalyses (13S)-hydroperoxy-(9Z,11E)-octadecadienoate = 13-oxo-(9Z,11E)-octadecadienoate + H2O. The catalysed reaction is (5Z,8Z,11Z,14Z)-eicosatetraenoate + reduced [NADPH--hemoprotein reductase] + O2 = 13-hydroxy-(5Z,8Z,11Z,14Z)-eicosatetraenoate + oxidized [NADPH--hemoprotein reductase] + H2O + H(+). It carries out the reaction (5Z,8Z,11Z,14Z)-eicosatetraenoate + reduced [NADPH--hemoprotein reductase] + O2 = 19-hydroxy-(5Z,8Z,11Z,14Z)-eicosatetraenoate + oxidized [NADPH--hemoprotein reductase] + H2O + H(+). It catalyses the reaction (9Z,12Z)-octadecadienoate + reduced [NADPH--hemoprotein reductase] + O2 = 11-hydroxy-(9Z,12Z)-octadecadienoate + oxidized [NADPH--hemoprotein reductase] + H2O + H(+). The protein operates within cofactor metabolism; retinol metabolism. It participates in steroid metabolism; cholesterol metabolism. Its pathway is lipid metabolism; arachidonate metabolism. Functionally, a cytochrome P450 monooxygenase involved in the metabolism of various endogenous substrates, including fatty acids, steroid hormones and vitamins. Mechanistically, uses molecular oxygen inserting one oxygen atom into a substrate, and reducing the second into a water molecule, with two electrons provided by NADPH via cytochrome P450 reductase (NADPH--hemoprotein reductase). Catalyzes the hydroxylation of carbon-hydrogen bonds. Exhibits high catalytic activity for the formation of hydroxyestrogens from estrone (E1) and 17beta-estradiol (E2), namely 2-hydroxy E1 and E2. Metabolizes cholesterol toward 25-hydroxycholesterol, a physiological regulator of cellular cholesterol homeostasis. May act as a major enzyme for all-trans retinoic acid biosynthesis in the liver. Catalyzes two successive oxidative transformation of all-trans retinol to all-trans retinal and then to the active form all-trans retinoic acid. Primarily catalyzes stereoselective epoxidation of the last double bond of polyunsaturated fatty acids (PUFA), displaying a strong preference for the (R,S) stereoisomer. Catalyzes bisallylic hydroxylation and omega-1 hydroxylation of PUFA. May also participate in eicosanoids metabolism by converting hydroperoxide species into oxo metabolites (lipoxygenase-like reaction, NADPH-independent). Plays a role in the oxidative metabolism of xenobiotics. Catalyzes the N-hydroxylation of heterocyclic amines and the O-deethylation of phenacetin. Metabolizes caffeine via N3-demethylation. The polypeptide is Cytochrome P450 1A2 (Homo sapiens (Human)).